A 447-amino-acid polypeptide reads, in one-letter code: Chordin-like protein 1 (447 aa).

Positions 1-22 are cleaved as a signal peptide; sequence MEGIKYIASLVFFFVFLEASKT. VWFC domains lie at 30–95 and 108–174; these read TYCM…PRCP and KSCE…RVCR. Residue Asn-113 is glycosylated (N-linked (GlcNAc...) asparagine). A Cell attachment site motif is present at residues 174 to 176; the sequence is RGD. The interval 199-219 is disordered; the sequence is HSYLRSPYDPPPSRQAGGLPR. The VWFC 3 domain maps to 253–318; it reads QVCVSNGKTY…LDGKCCKVCP (66 aa). N-linked (GlcNAc...) asparagine glycosylation occurs at Asn-286.

Its subcellular location is the secreted. In terms of biological role, seems to antagonize the function of BMP4 by binding to it and preventing its interaction with receptors. Alters the fate commitment of neural stem cells from gliogenesis to neurogenesis. Contributes to neuronal differentiation of neural stem cells in the brain by preventing the adoption of a glial fate. May play a crucial role in dorsoventral axis formation. May play a role in embryonic bone formation. Plays a role during anterior segment eye development. The sequence is that of Chordin-like protein 1 (Chrdl1) from Rattus norvegicus (Rat).